Reading from the N-terminus, the 506-residue chain is Asparagine--tRNA ligase (506 aa).

This sequence belongs to the class-II aminoacyl-tRNA synthetase family. In terms of assembly, homodimer.

The protein resides in the cytoplasm. The enzyme catalyses tRNA(Asn) + L-asparagine + ATP = L-asparaginyl-tRNA(Asn) + AMP + diphosphate + H(+). This Onion yellows phytoplasma (strain OY-M) protein is Asparagine--tRNA ligase.